The primary structure comprises 417 residues: Aminoacyltransferase FemB (417 aa).

Belongs to the FemABX family.

It localises to the cytoplasm. The enzyme catalyses MurNAc-L-Ala-D-isoglutaminyl-L-Lys-(N(6)-tri-Gly)-D-Ala-D-Ala-diphospho-di-trans,octa-cis-undecaprenyl-GlcNAc + 2 glycyl-tRNA(Gly) = MurNAc-L-Ala-D-isoglutaminyl-L-Lys-(N(6)-penta-Gly)-D-Ala-D-Ala-diphospho-di-trans,octa-cis-undecaprenyl-GlcNAc + 2 tRNA(Gly) + 2 H(+). Functionally, catalyzes the incorporation of amino acid(s) into the interchain peptide bridge of peptidoglycan, using aminoacyl-tRNA as amino acid donor. In Staphylococcus epidermidis (strain ATCC 35984 / DSM 28319 / BCRC 17069 / CCUG 31568 / BM 3577 / RP62A), this protein is Aminoacyltransferase FemB (femB).